Here is a 1296-residue protein sequence, read N- to C-terminus: DNA-directed RNA polymerase subunit beta' (1296 aa).

Zn(2+) contacts are provided by C60, C62, C75, and C78. Positions G188–R209 are disordered. D535, D537, and D539 together coordinate Mg(2+). Zn(2+) is bound by residues C877, C954, C961, and C964.

The protein belongs to the RNA polymerase beta' chain family. The RNAP catalytic core consists of 2 alpha, 1 beta, 1 beta' and 1 omega subunit. When a sigma factor is associated with the core the holoenzyme is formed, which can initiate transcription. It depends on Mg(2+) as a cofactor. Zn(2+) is required as a cofactor.

It carries out the reaction RNA(n) + a ribonucleoside 5'-triphosphate = RNA(n+1) + diphosphate. Functionally, DNA-dependent RNA polymerase catalyzes the transcription of DNA into RNA using the four ribonucleoside triphosphates as substrates. The sequence is that of DNA-directed RNA polymerase subunit beta' from Parafrankia sp. (strain EAN1pec).